The following is a 729-amino-acid chain: MNPTNLNFGKILKQVEMVDVNEDSLDLKFPKRTIVDISTDTFIKIIFEKDDNYYLFLNYVNALDLYLNYYTNINLVSSNKQLLNQDEHIDVYFKGGNVMNYHFRTMVSDPRLKELFSAYFKKSDFDFSVSIHTDTDNRFNQLKTYVYPKIIDYLITTSNLFNEYLQEIINGDINKSTIKIDPKFLHNFKQDNADLKYYTIRDTIKDIIGLPRFNFVKEIIDNTRNTNTKNFMHIRQIDNIGRYIRVKFHDNSIIQFIPSDKSFYELKYTPYIINNFNQVIDYYNEYVLNGLIPVYHNFYENSKYHACLLYPYYKYLVEPIGQHEMEYSDLIDKIIKYNFSLLEKSEFYTKEKINSMLQQISTSLNELKDTYYEKNSDNPPDKTEVTNSNAFIRYTVNKNRSDNPHIELAPTNNFLVYNDFEKSDPLSIINFDDNQTIKTTNNVHYVSGNMLIKNILGNRQILDFDLFRIKFNLVAVNYIFENEKLLREFKIPSEFIDVSVTIIDSNVYNEDHQTFIMPIKLDNTIIPDIPVKSHSYTYFIGDLIRILFTDFNFFPWMKGKYEKRIKRLLLLLYLYDQQHQTNYLDTLYNMATNIKYNLTNPNKTQKNMDKYALSKVHLNSYKDYSNLFDLVYIDNKYGPIKEPMKMLLIVSEILDKNNALDIINHFRKYLKLAPLTNISNLKTEFGKFLDEIISTYNDINPQNIQAKSSINTLVSRNNYSMIKNNRRNY.

It belongs to the mimivirus L515/L516 family.

It is found in the virion. This is an uncharacterized protein from Acanthamoeba polyphaga mimivirus (APMV).